A 249-amino-acid chain; its full sequence is 3alpha-hydroxy bile acid-CoA-ester 3-dehydrogenase 1/3 (249 aa).

NAD(+) is bound by residues 15 to 18 (TRGI), Glu-38, Glu-42, and Asn-92. Ser-144 serves as a coordination point for substrate. Catalysis depends on proton donor/acceptor residues Tyr-157 and Lys-161. NAD(+)-binding positions include Lys-161 and 190-192 (VDT).

The protein belongs to the short-chain dehydrogenases/reductases (SDR) family. In terms of assembly, homotetramer.

It catalyses the reaction a 3alpha-hydroxy bile acid CoA + NAD(+) = a 3-oxo bile acid CoA + NADH + H(+). It carries out the reaction choloyl-CoA + NAD(+) = 7alpha,12alpha-dihydroxy-3-oxochol-24-oyl-CoA + NADH + H(+). The catalysed reaction is chenodeoxycholoyl-CoA + NAD(+) = 7alpha-hydroxy-3-oxochol-24-oyl-CoA + NADH + H(+). The enzyme catalyses deoxycholoyl-CoA + NAD(+) = 12alpha-hydroxy-3-oxocholan-24-oyl-CoA + NADH + H(+). It catalyses the reaction lithocholoyl-CoA + NAD(+) = 3-oxocholan-24-oyl-CoA + NADH + H(+). It functions in the pathway lipid metabolism; bile acid biosynthesis. Its function is as follows. Involved in the multi-step bile acid 7alpha-dehydroxylation pathway that transforms primary bile acids to secondary bile acids in the human gut. Catalyzes the oxidation of C3-hydroxyl group of CoA conjugated bile acids generating a C3-oxo bile acid intermediate. Can use choloyl-CoA, chenodeoxycholoyl-CoA, deoxycholoyl-CoA, and lithocholoyl-CoA as substrates with similar efficiency. Highly prefers NAD over NADP as cosubstrate. Also catalyzes the reverse reactions; in vitro, the preferred direction of reaction depends on the pH. Has very little activity with unconjugated (non-CoA) bile acid substrates. The polypeptide is 3alpha-hydroxy bile acid-CoA-ester 3-dehydrogenase 1/3 (baiA1) (Clostridium scindens (strain JCM 10418 / VPI 12708)).